The following is a 236-amino-acid chain: Ribonuclease 3 (236 aa).

The RNase III domain occupies 7 to 136; the sequence is KSYILKKFNI…FIGALYLDQG (130 aa). Residue Glu-49 participates in Mg(2+) binding. Asp-53 is a catalytic residue. Positions 122 and 125 each coordinate Mg(2+). Glu-125 is a catalytic residue. Residues 162–232 form the DRBM domain; it reads DFKSRLQERL…ARAALKILED (71 aa).

It belongs to the ribonuclease III family. As to quaternary structure, homodimer. Mg(2+) serves as cofactor.

It localises to the cytoplasm. The enzyme catalyses Endonucleolytic cleavage to 5'-phosphomonoester.. Digests double-stranded RNA. Involved in the processing of primary rRNA transcript to yield the immediate precursors to the large and small rRNAs (23S and 16S). Processes some mRNAs, and tRNAs when they are encoded in the rRNA operon. Processes pre-crRNA and tracrRNA of type II CRISPR loci if present in the organism. This Leuconostoc mesenteroides subsp. mesenteroides (strain ATCC 8293 / DSM 20343 / BCRC 11652 / CCM 1803 / JCM 6124 / NCDO 523 / NBRC 100496 / NCIMB 8023 / NCTC 12954 / NRRL B-1118 / 37Y) protein is Ribonuclease 3.